A 398-amino-acid chain; its full sequence is 1-deoxy-D-xylulose 5-phosphate reductoisomerase (398 aa).

NADPH is bound by residues threonine 10, glycine 11, serine 12, isoleucine 13, asparagine 38, and asparagine 124. Lysine 125 is a 1-deoxy-D-xylulose 5-phosphate binding site. Residue glutamate 126 coordinates NADPH. Aspartate 150 contributes to the Mn(2+) binding site. 1-deoxy-D-xylulose 5-phosphate contacts are provided by serine 151, glutamate 152, serine 176, and histidine 199. A Mn(2+)-binding site is contributed by glutamate 152. NADPH is bound at residue glycine 205. Residues serine 212, asparagine 217, lysine 218, and glutamate 221 each coordinate 1-deoxy-D-xylulose 5-phosphate. Glutamate 221 contributes to the Mn(2+) binding site.

This sequence belongs to the DXR family. It depends on Mg(2+) as a cofactor. The cofactor is Mn(2+).

The enzyme catalyses 2-C-methyl-D-erythritol 4-phosphate + NADP(+) = 1-deoxy-D-xylulose 5-phosphate + NADPH + H(+). The protein operates within isoprenoid biosynthesis; isopentenyl diphosphate biosynthesis via DXP pathway; isopentenyl diphosphate from 1-deoxy-D-xylulose 5-phosphate: step 1/6. Catalyzes the NADPH-dependent rearrangement and reduction of 1-deoxy-D-xylulose-5-phosphate (DXP) to 2-C-methyl-D-erythritol 4-phosphate (MEP). The protein is 1-deoxy-D-xylulose 5-phosphate reductoisomerase of Crocosphaera subtropica (strain ATCC 51142 / BH68) (Cyanothece sp. (strain ATCC 51142)).